We begin with the raw amino-acid sequence, 288 residues long: Mycothiol S-conjugate amidase (288 aa).

The Zn(2+) site is built by histidine 12, aspartate 15, and histidine 142.

The protein belongs to the MshB deacetylase family. Mca subfamily. As to quaternary structure, monomer. It depends on Zn(2+) as a cofactor.

It catalyses the reaction mycothiol S-conjugate + H2O = an N-acetyl-L-cysteine-S-conjugate + 1D-myo-inositol 2-amino-2-deoxy-alpha-D-glucopyranoside. Partially inhibited by MSH when MSmB (a bimane derivative of MSH) is used as substrate. A mycothiol (MSH, N-acetyl-cysteinyl-glucosaminyl-inositol) S-conjugate amidase, it recycles conjugated MSH to the N-acetyl cysteine conjugate and the MSH precursor. Involved in MSH-dependent detoxification of a number of alkylating agents and antibiotics. Activity is specific for the mycothiol moiety. The protein is Mycothiol S-conjugate amidase of Mycolicibacterium smegmatis (strain ATCC 700084 / mc(2)155) (Mycobacterium smegmatis).